Reading from the N-terminus, the 165-residue chain is 6,7-dimethyl-8-ribityllumazine synthase (165 aa).

5-amino-6-(D-ribitylamino)uracil-binding positions include Phe-22, 56–58 (SME), and 80–82 (AVI). Residue 85 to 86 (ET) coordinates (2S)-2-hydroxy-3-oxobutyl phosphate. The active-site Proton donor is His-88. Phe-113 lines the 5-amino-6-(D-ribitylamino)uracil pocket. A (2S)-2-hydroxy-3-oxobutyl phosphate-binding site is contributed by Arg-127.

The protein belongs to the DMRL synthase family.

It catalyses the reaction (2S)-2-hydroxy-3-oxobutyl phosphate + 5-amino-6-(D-ribitylamino)uracil = 6,7-dimethyl-8-(1-D-ribityl)lumazine + phosphate + 2 H2O + H(+). It participates in cofactor biosynthesis; riboflavin biosynthesis; riboflavin from 2-hydroxy-3-oxobutyl phosphate and 5-amino-6-(D-ribitylamino)uracil: step 1/2. Catalyzes the formation of 6,7-dimethyl-8-ribityllumazine by condensation of 5-amino-6-(D-ribitylamino)uracil with 3,4-dihydroxy-2-butanone 4-phosphate. This is the penultimate step in the biosynthesis of riboflavin. The protein is 6,7-dimethyl-8-ribityllumazine synthase of Thermotoga sp. (strain RQ2).